Reading from the N-terminus, the 1033-residue chain is SIT4-associating protein SAP190 (1033 aa).

3 disordered regions span residues 32–82, 147–213, and 768–1033; these read DQDD…TTES, PEII…QVET, and FGND…KEAF. The span at 158 to 170 shows a compositional bias: basic and acidic residues; the sequence is ILIERDRKDKKED. Positions 171–182 are enriched in acidic residues; the sequence is AEEGGDSEETTN. The segment covering 183–195 has biased composition (basic and acidic residues); that stretch reads DSDHDSGDERSVD. The residue at position 774 (S774) is a Phosphoserine. 2 stretches are compositionally biased toward acidic residues: residues 784 to 793 and 825 to 838; these read SEDIIGDTEG and ENEENEEDYAEYSD. 3 positions are modified to phosphoserine: S857, S862, and S892. The segment covering 858 to 879 has biased composition (basic and acidic residues); sequence DDGKSKSAESEFTDKISEHRDG. Residues 909 to 924 show a composition bias toward polar residues; that stretch reads SRSQPSDPKLQDQNIF. The segment covering 932 to 944 has biased composition (acidic residues); sequence GVGDDDDYMDPND. T990 is modified (phosphothreonine). The residue at position 991 (S991) is a Phosphoserine. The span at 1000–1018 shows a compositional bias: acidic residues; sequence ISSDEEDSEDEDEENDMGN.

This sequence belongs to the SAPS family. As to quaternary structure, associates with the SIT4 protein phosphatase catalytic subunit in a cell-cycle-dependent manner. Post-translationally, hyperphosphorylated in the absence of SIT4.

It is found in the cytoplasm. Its function is as follows. Positive regulator of protein phosphatase SIT4. Involved in the general amino acid control (GAAC) response regulated by TOR. Involved in the dephosphorylation of the elongator complex subunit IKI3. The protein is SIT4-associating protein SAP190 (SAP190) of Saccharomyces cerevisiae (strain ATCC 204508 / S288c) (Baker's yeast).